The chain runs to 299 residues: ATP synthase gamma chain (299 aa).

Belongs to the ATPase gamma chain family. As to quaternary structure, F-type ATPases have 2 components, CF(1) - the catalytic core - and CF(0) - the membrane proton channel. CF(1) has five subunits: alpha(3), beta(3), gamma(1), delta(1), epsilon(1). CF(0) has three main subunits: a, b and c.

The protein localises to the cell membrane. Functionally, produces ATP from ADP in the presence of a proton gradient across the membrane. The gamma chain is believed to be important in regulating ATPase activity and the flow of protons through the CF(0) complex. This Levilactobacillus brevis (strain ATCC 367 / BCRC 12310 / CIP 105137 / JCM 1170 / LMG 11437 / NCIMB 947 / NCTC 947) (Lactobacillus brevis) protein is ATP synthase gamma chain.